The following is a 132-amino-acid chain: Fatty acid-binding protein, intestinal (132 aa).

Ala2 bears the N-acetylalanine mark. Residues Trp83 and Arg107 each contribute to the hexadecanoate site. Positions 83 and 107 each coordinate tetradecanoate.

Belongs to the calycin superfamily. Fatty-acid binding protein (FABP) family. In terms of tissue distribution, expressed in the small intestine. Highest expression levels in the proximal ileum.

Its subcellular location is the cytoplasm. Its function is as follows. FABPs are thought to play a role in the intracellular transport of long-chain fatty acids and their acyl-CoA esters. FABP2 is probably involved in triglyceride-rich lipoprotein synthesis. Binds saturated long-chain fatty acids with a high affinity, but binds with a lower affinity to unsaturated long-chain fatty acids. FABP2 may also help maintain energy homeostasis by functioning as a lipid sensor. The sequence is that of Fatty acid-binding protein, intestinal (Fabp2) from Mus musculus (Mouse).